A 201-amino-acid chain; its full sequence is Transcription factor MYB82 (201 aa).

HTH myb-type domains follow at residues K9–L61 and R62–P116. DNA-binding regions (H-T-H motif) lie at residues W37–L61 and W89–L112. The segment at L112–F133 is disordered.

Homodimer and heterodimer with GL1. Part of the WD40-bHLH-MYB complex. Interacts with BHLH012/MYC1 and BHLH042/TT8. Interacts (via N-terminus) with GL1 and GL3. In terms of tissue distribution, mainly expressed in the trichomes of new leaves.

The protein resides in the nucleus. Its function is as follows. Transcription activation factor positively regulating trichomes development. Has a function nearly equivalent to that of GL1 and can complement gl1 mutants. In Arabidopsis thaliana (Mouse-ear cress), this protein is Transcription factor MYB82 (MYB82).